Reading from the N-terminus, the 186-residue chain is Ribosome-recycling factor (186 aa).

It belongs to the RRF family.

It is found in the cytoplasm. In terms of biological role, responsible for the release of ribosomes from messenger RNA at the termination of protein biosynthesis. May increase the efficiency of translation by recycling ribosomes from one round of translation to another. This is Ribosome-recycling factor from Bordetella petrii (strain ATCC BAA-461 / DSM 12804 / CCUG 43448).